The sequence spans 317 residues: Porphobilinogen deaminase (317 aa).

C240 is subject to S-(dipyrrolylmethanemethyl)cysteine.

The protein belongs to the HMBS family. As to quaternary structure, monomer. It depends on dipyrromethane as a cofactor.

It carries out the reaction 4 porphobilinogen + H2O = hydroxymethylbilane + 4 NH4(+). It participates in porphyrin-containing compound metabolism; protoporphyrin-IX biosynthesis; coproporphyrinogen-III from 5-aminolevulinate: step 2/4. Its function is as follows. Tetrapolymerization of the monopyrrole PBG into the hydroxymethylbilane pre-uroporphyrinogen in several discrete steps. This Nitratidesulfovibrio vulgaris (strain DSM 19637 / Miyazaki F) (Desulfovibrio vulgaris) protein is Porphobilinogen deaminase.